The following is a 269-amino-acid chain: Signal recognition particle receptor subunit beta (269 aa).

A helical membrane pass occupies residues Leu-35–Ile-55. GTP is bound by residues Gly-69 to Leu-77 and Thr-90 to Ser-93. Ser-110 is modified (phosphoserine). GTP-binding positions include Gly-118 and Asn-178 to Asp-181. Thr-212 carries the post-translational modification Phosphothreonine. Position 246 (Ala-246) interacts with GTP.

This sequence belongs to the SRP receptor beta subunit family. As to quaternary structure, heterodimer with SRPRA.

The protein resides in the endoplasmic reticulum membrane. Its function is as follows. Component of the SRP (signal recognition particle) receptor. Ensures, in conjunction with the signal recognition particle, the correct targeting of the nascent secretory proteins to the endoplasmic reticulum membrane system. May mediate the membrane association of SR. The polypeptide is Signal recognition particle receptor subunit beta (Srprb) (Mus musculus (Mouse)).